We begin with the raw amino-acid sequence, 235 residues long: Large ribosomal subunit protein uL1 (235 aa).

The protein belongs to the universal ribosomal protein uL1 family. As to quaternary structure, part of the 50S ribosomal subunit.

In terms of biological role, binds directly to 23S rRNA. The L1 stalk is quite mobile in the ribosome, and is involved in E site tRNA release. Functionally, protein L1 is also a translational repressor protein, it controls the translation of the L11 operon by binding to its mRNA. The sequence is that of Large ribosomal subunit protein uL1 from Prochlorococcus marinus (strain MIT 9312).